A 510-amino-acid polypeptide reads, in one-letter code: NAD(P)H-quinone oxidoreductase subunit 2 A, chloroplastic (510 aa).

The next 13 membrane-spanning stretches (helical) occupy residues 24-44 (LLLF…GLIL), 57-77 (IPWL…ALLF), 99-119 (IFQF…VEYI), 124-144 (MALT…MFLC), 149-169 (LITI…LSGY), 183-203 (YLLM…WLYG), 227-247 (PGIS…LSPA), 295-315 (WHLL…LIAI), 323-343 (MLAY…IVGD), 354-374 (YMLF…LFGL), 395-415 (ALSL…AGFF), 418-438 (IYLF…IGLL), and 484-504 (MIVC…IITI).

This sequence belongs to the complex I subunit 2 family. NDH is composed of at least 16 different subunits, 5 of which are encoded in the nucleus.

The protein resides in the plastid. Its subcellular location is the chloroplast thylakoid membrane. The catalysed reaction is a plastoquinone + NADH + (n+1) H(+)(in) = a plastoquinol + NAD(+) + n H(+)(out). The enzyme catalyses a plastoquinone + NADPH + (n+1) H(+)(in) = a plastoquinol + NADP(+) + n H(+)(out). In terms of biological role, NDH shuttles electrons from NAD(P)H:plastoquinone, via FMN and iron-sulfur (Fe-S) centers, to quinones in the photosynthetic chain and possibly in a chloroplast respiratory chain. The immediate electron acceptor for the enzyme in this species is believed to be plastoquinone. Couples the redox reaction to proton translocation, and thus conserves the redox energy in a proton gradient. This Spinacia oleracea (Spinach) protein is NAD(P)H-quinone oxidoreductase subunit 2 A, chloroplastic.